The chain runs to 121 residues: Protein yippee-like 5 (121 aa).

One can recognise a Yippee domain in the interval 13–110 (RLFSCANCDA…LERALVRESE (98 aa)). Positions 17, 20, 73, and 76 each coordinate Zn(2+). Ser-118 is subject to Phosphoserine.

Belongs to the yippee family. Identified in the CTLH complex that contains GID4, RANBP9 and/or RANBP10, MKLN1, MAEA, RMND5A (or alternatively its paralog RMND5B), GID8, ARMC8, WDR26 and YPEL5. Within this complex, MAEA, RMND5A (or alternatively its paralog RMND5B), GID8, WDR26, and RANBP9 and/or RANBP10 form the catalytic core, while GID4, MKLN1, ARMC8 and YPEL5 have ancillary roles. Interacts with RANBP9 and RANBP10.

The protein localises to the nucleus. It is found in the cytoplasm. Its subcellular location is the cytoskeleton. It localises to the microtubule organizing center. The protein resides in the centrosome. The protein localises to the spindle pole. It is found in the midbody. In terms of biological role, component of the CTLH E3 ubiquitin-protein ligase complex that selectively accepts ubiquitin from UBE2H and mediates ubiquitination and subsequent proteasomal degradation of the transcription factor HBP1. Required for normal cell proliferation. The chain is Protein yippee-like 5 (YPEL5) from Macaca fascicularis (Crab-eating macaque).